Reading from the N-terminus, the 164-residue chain is Protein SprT (164 aa).

The region spanning 14–156 is the SprT-like domain; that stretch reads QQAETFFKRP…LCKRCRETLV (143 aa). Zn(2+) is bound at residue His69. The active site involves Glu70. His73 provides a ligand contact to Zn(2+).

Belongs to the SprT family. It depends on Zn(2+) as a cofactor.

It localises to the cytoplasm. The protein is Protein SprT of Pseudomonas putida (strain W619).